Reading from the N-terminus, the 176-residue chain is Interleukin-7 (176 aa).

Residues 1–25 (MFHVSFRYIFGIPPLILVLLPVASS) form the signal peptide. 3 cysteine pairs are disulfide-bonded: cysteine 27-cysteine 165, cysteine 58-cysteine 153, and cysteine 71-cysteine 116. Asparagine 94, asparagine 115, and asparagine 140 each carry an N-linked (GlcNAc...) asparagine glycan. Positions 118–143 (SKGKGRKPPSLSEAQPTKNLEENKSS) are disordered.

The protein belongs to the IL-7/IL-9 family. As to quaternary structure, interacts with IL7R and CSF2RG.

The protein localises to the secreted. Its function is as follows. Hematopoietic cytokine that plays an essential role in the development, expansion, and survival of naive and memory T-cells and B-cells thereby regulating the number of mature lymphocytes and maintaining lymphoid homeostasis. Mechanistically, exerts its biological effects through a receptor composed of IL7RA subunit and the cytokine receptor common subunit gamma/CSF2RG. Binding to the receptor leads to activation of various kinases including JAK1 or JAK3 depending on the cell type and subsequently propagation of signals through activation of several downstream signaling pathways including the PI3K/Akt/mTOR or the JAK-STAT5. The chain is Interleukin-7 (IL7) from Bos taurus (Bovine).